The following is a 532-amino-acid chain: Developmental and secondary metabolism regulator ve1 (532 aa).

Residues 26–220 (NRSLWYQLTV…ADQGCRVRIR (195 aa)) enclose the Velvet domain. The Nuclear localization signal signature appears at 40–45 (ERARAC). Over residues 217–229 (VRIRRDVRMRKRD) the composition is skewed to basic residues. Disordered regions lie at residues 217–440 (VRIR…TEPS) and 458–520 (PQVD…RADG). A compositionally biased stretch (low complexity) spans 233 to 250 (GGNNNNNNNAGNNAGNNG). Basic and acidic residues-rich tracts occupy residues 251–260 (FERREEDFGR) and 283–294 (SEHRASYSDVSR). Pro residues predominate over residues 302–317 (YPPPPPPPPSYDPTPS). Low complexity predominate over residues 397–411 (STSTYVPPSPSVYST). A PEST region spans residues 435–463 (MNTEPSRGSIKISALVEPMPVIEPQVDPL). Polar residues predominate over residues 481–493 (FAQNTRPLFNGQR).

This sequence belongs to the velvet family. VeA subfamily. As to quaternary structure, component of the heterotrimeric velvet complex composed of laeA, ve1 and velB; Ve1 acting as a bridging protein between laeA and velB. Interacts directly with laeA and velB.

It localises to the nucleus. The protein localises to the cytoplasm. Its function is as follows. Component of the velvet transcription factor complex that controls sexual/asexual developmental ratio in response to light, promoting sexual development in the darkness while stimulating asexual sporulation under illumination. The velvet complex hat acts as a global regulator for secondary metabolite gene expression. Controls the expression of the aurofusarin and trichothecene gene clusters. Also controls the expression of the deoxynivalenol (DON) gene cluster. Regulates hyphal growth and pigment formation. Acts as a positive regulator of virulence. The polypeptide is Developmental and secondary metabolism regulator ve1 (Gibberella zeae (strain ATCC MYA-4620 / CBS 123657 / FGSC 9075 / NRRL 31084 / PH-1) (Wheat head blight fungus)).